Reading from the N-terminus, the 260-residue chain is Thiamine thiazole synthase (260 aa).

Residues Ser41, 60–61 (ER), Gly68, Val131, and 159–161 (HVD) contribute to the NAD(+) site. 2 residues coordinate Fe cation: Asp161 and His176. Met225 is an NAD(+) binding site. Arg235 contacts glycine.

Belongs to the THI4 family. As to quaternary structure, homooctamer; tetramer of dimers. Requires Fe(2+) as cofactor.

The enzyme catalyses hydrogen sulfide + glycine + NAD(+) = ADP-5-ethyl-4-methylthiazole-2-carboxylate + nicotinamide + 3 H2O + H(+). It participates in cofactor biosynthesis; thiamine diphosphate biosynthesis. Its function is as follows. Involved in the biosynthesis of the thiazole moiety of thiamine. Catalyzes the conversion of NAD and glycine to adenosine diphosphate 5-(2-hydroxyethyl)-4-methylthiazole-2-carboxylate (ADT), an adenylated thiazole intermediate, using free sulfide as a source of sulfur. This chain is Thiamine thiazole synthase, found in Archaeoglobus fulgidus (strain ATCC 49558 / DSM 4304 / JCM 9628 / NBRC 100126 / VC-16).